The chain runs to 382 residues: D-galactonate dehydratase (382 aa).

Asp183 is a Mg(2+) binding site. The Proton donor role is filled by His185. Residues Glu209 and Glu235 each contribute to the Mg(2+) site. The Proton acceptor role is filled by His285.

The protein belongs to the mandelate racemase/muconate lactonizing enzyme family. GalD subfamily. It depends on Mg(2+) as a cofactor.

It catalyses the reaction D-galactonate = 2-dehydro-3-deoxy-D-galactonate + H2O. The protein operates within carbohydrate acid metabolism; D-galactonate degradation; D-glyceraldehyde 3-phosphate and pyruvate from D-galactonate: step 1/3. Catalyzes the dehydration of D-galactonate to 2-keto-3-deoxy-D-galactonate. In Salmonella dublin (strain CT_02021853), this protein is D-galactonate dehydratase.